We begin with the raw amino-acid sequence, 467 residues long: Cysteine protease ATG4a (467 aa).

Residues 1 to 35 (MKALCDRFVPQQCSSSSKSDTHDKSPLVSDSGPSD) are disordered. Catalysis depends on C170, which acts as the Nucleophile. Active-site residues include D364 and H366. The tract at residues 448–467 (NYGFADDDSEDEREDDWQML) is disordered. Residues 452–467 (ADDDSEDEREDDWQML) are compositionally biased toward acidic residues.

The protein belongs to the peptidase C54 family. As to quaternary structure, interacts with ATG8. Constitutively expressed.

It localises to the cytoplasm. The enzyme catalyses [protein]-C-terminal L-amino acid-glycyl-phosphatidylethanolamide + H2O = [protein]-C-terminal L-amino acid-glycine + a 1,2-diacyl-sn-glycero-3-phosphoethanolamine. Its function is as follows. Cysteine protease that plays a key role in autophagy by mediating both proteolytic activation and delipidation of ATG8 family proteins. The protease activity is required for proteolytic activation of ATG8 family proteins: cleaves the C-terminal amino acid of ATG8 proteins to reveal a C-terminal glycine. Exposure of the glycine at the C-terminus is essential for ATG8 proteins conjugation to phosphatidylethanolamine (PE) and insertion to membranes, which is necessary for autophagy. In addition to the protease activity, also mediates delipidation of PE-conjugated ATG8 proteins. The chain is Cysteine protease ATG4a from Arabidopsis thaliana (Mouse-ear cress).